A 492-amino-acid polypeptide reads, in one-letter code: UPF0652 protein C22H10.08 (492 aa).

This sequence belongs to the UPF0652 family.

The protein localises to the cytoplasm. The protein resides in the nucleus. This is UPF0652 protein C22H10.08 from Schizosaccharomyces pombe (strain 972 / ATCC 24843) (Fission yeast).